We begin with the raw amino-acid sequence, 333 residues long: Glyceraldehyde-3-phosphate dehydrogenase (333 aa).

Residues 11–12 (RI), Asp-35, Met-79, and Ser-121 each bind NAD(+). Residues 150-152 (SCT), Thr-181, 210-211 (TG), and Arg-233 each bind D-glyceraldehyde 3-phosphate. Cys-151 serves as the catalytic Nucleophile. Asn-315 provides a ligand contact to NAD(+).

This sequence belongs to the glyceraldehyde-3-phosphate dehydrogenase family. Homotetramer.

It is found in the cytoplasm. It catalyses the reaction D-glyceraldehyde 3-phosphate + phosphate + NAD(+) = (2R)-3-phospho-glyceroyl phosphate + NADH + H(+). It functions in the pathway carbohydrate degradation; glycolysis; pyruvate from D-glyceraldehyde 3-phosphate: step 1/5. In terms of biological role, catalyzes the oxidative phosphorylation of glyceraldehyde 3-phosphate (G3P) to 1,3-bisphosphoglycerate (BPG) using the cofactor NAD. The first reaction step involves the formation of a hemiacetal intermediate between G3P and a cysteine residue, and this hemiacetal intermediate is then oxidized to a thioester, with concomitant reduction of NAD to NADH. The reduced NADH is then exchanged with the second NAD, and the thioester is attacked by a nucleophilic inorganic phosphate to produce BPG. The sequence is that of Glyceraldehyde-3-phosphate dehydrogenase (gap) from Bacteroides fragilis (strain YCH46).